The chain runs to 201 residues: Large ribosomal subunit protein uL4 (201 aa).

The tract at residues 42–67 (GNSAQKTRSEVSGGGKKPWNQKGTGR) is disordered.

This sequence belongs to the universal ribosomal protein uL4 family. In terms of assembly, part of the 50S ribosomal subunit.

Functionally, one of the primary rRNA binding proteins, this protein initially binds near the 5'-end of the 23S rRNA. It is important during the early stages of 50S assembly. It makes multiple contacts with different domains of the 23S rRNA in the assembled 50S subunit and ribosome. In terms of biological role, forms part of the polypeptide exit tunnel. The sequence is that of Large ribosomal subunit protein uL4 from Legionella pneumophila (strain Paris).